A 493-amino-acid chain; its full sequence is MKRKLTGLFGAPVSDRENSMTAGPRGPLLMQDIYFLEQMAHFDREVIPERRMHAKGSGAFGTFTVTNDITKYTCASIFAEVGKQTEMFARFSTVAGERGAGDAERDIRGFALKFYTDEGNWDLVGNNTPVFFFRDPKLFPSLNHVVKRNPKTNMKDPQANWDFWTLLPEALHQITILMTDRGIPKGFRNMHGFGSHTYSMYNDKGERFWVKFHHRTQQGIENYSAEEAEQVMAKDRDSSQRDLFNNIEQGNFPKWKMYIQVMTEEQARNHKDNPFDLTKVWYKDEYPLIEVGEFELNRNPENYFQDVEQAAFAPTNIVPGLDFSPDKMLQGRLFSYGDTQRYRLGVNHWQIPVNQPKGVGMENICPFSRDGHMRILDNNQGASTHYYPNSNGAFEDQPQYKKPALDIQGQAYEYDFREDDDNYFEQPGKLFRLLSSEEQQILFNNTANEMSPVTDALKHRHIRHCYKADPAYGQGVAEAMGIDINEVDLDVAD.

The tract at residues Met-1 to Pro-24 is disordered. Residues His-53 and Asn-126 contribute to the active site. Position 336 (Tyr-336) interacts with heme.

It belongs to the catalase family. In terms of assembly, homodimer. The cofactor is heme.

The enzyme catalyses 2 H2O2 = O2 + 2 H2O. In terms of biological role, decomposes hydrogen peroxide into water and oxygen; serves to protect cells from the toxic effects of hydrogen peroxide. In Staphylococcus xylosus, this protein is Catalase A (katA).